Consider the following 309-residue polypeptide: Protein FdhE (309 aa).

Belongs to the FdhE family.

The protein localises to the cytoplasm. Its function is as follows. Necessary for formate dehydrogenase activity. The protein is Protein FdhE of Shigella boydii serotype 18 (strain CDC 3083-94 / BS512).